Reading from the N-terminus, the 461-residue chain is Asparagine--tRNA ligase (461 aa).

This sequence belongs to the class-II aminoacyl-tRNA synthetase family. In terms of assembly, homodimer.

The protein localises to the cytoplasm. It catalyses the reaction tRNA(Asn) + L-asparagine + ATP = L-asparaginyl-tRNA(Asn) + AMP + diphosphate + H(+). The chain is Asparagine--tRNA ligase from Geobacter metallireducens (strain ATCC 53774 / DSM 7210 / GS-15).